Here is a 211-residue protein sequence, read N- to C-terminus: Arginine exporter protein ArgO (211 aa).

The next 6 membrane-spanning stretches (helical) occupy residues 1-21 (MISY…PLGP), 37-57 (LMIA…GIFG), 68-88 (LLAL…FGAL), 111-131 (IIAT…DTFV), 147-167 (WFAL…ALLA), and 179-199 (AQRI…FQLA).

The protein belongs to the LysE/ArgO transporter (TC 2.A.75) family.

The protein resides in the cell inner membrane. It carries out the reaction L-arginine(in) = L-arginine(out). Functionally, involved in the export of arginine. Important to control the intracellular level of arginine and the correct balance between arginine and lysine. The protein is Arginine exporter protein ArgO of Salmonella typhimurium (strain LT2 / SGSC1412 / ATCC 700720).